Reading from the N-terminus, the 297-residue chain is Homoserine kinase (297 aa).

Pro82–Ser92 provides a ligand contact to ATP.

The protein belongs to the GHMP kinase family. Homoserine kinase subfamily.

It localises to the cytoplasm. The enzyme catalyses L-homoserine + ATP = O-phospho-L-homoserine + ADP + H(+). The protein operates within amino-acid biosynthesis; L-threonine biosynthesis; L-threonine from L-aspartate: step 4/5. Its function is as follows. Catalyzes the ATP-dependent phosphorylation of L-homoserine to L-homoserine phosphate. The chain is Homoserine kinase from Bacillus cereus (strain ATCC 14579 / DSM 31 / CCUG 7414 / JCM 2152 / NBRC 15305 / NCIMB 9373 / NCTC 2599 / NRRL B-3711).